The primary structure comprises 319 residues: MYKKFVPFAVFLFLFFVSFEMMENPHALDYIGAMKKDTVTVTASKDPLYEELLQKAPEYEVKPQNARIDKVWKSIPGYNGLKVNIEQSYKKMKQHGKFREKDLVYSQVKPSVHLESLQPEPIYKGNPDKPMVAFLINVAWGNEYLEKMLPILQKHQVKATFFLEGNWVRNNVQLAKKIAKDGHEIGNHSYNHPDMSKLTTGRISEQLDKTNEQIEQTIGVKPKWFAPPSGSFRKAVIDIAAEKQMGTVMWTVDTIDWQKPAPSVLQTRVLSKIHNGAMILMHPTDPTAESLEALITQIKDKGYALGTVTELMDETRLLK.

The first 27 residues, 1 to 27 (MYKKFVPFAVFLFLFFVSFEMMENPHA), serve as a signal peptide directing secretion. The region spanning 130–306 (PMVAFLINVA…QIKDKGYALG (177 aa)) is the NodB homology domain.

The protein belongs to the polysaccharide deacetylase family.

This is an uncharacterized protein from Bacillus subtilis (strain 168).